Here is a 180-residue protein sequence, read N- to C-terminus: Small ribosomal subunit protein eS10y (180 aa).

The segment at 92–180 is disordered; that stretch reads LKKQQKPLGR…GGGAAGSDLP (89 aa). The span at 108 to 128 shows a compositional bias: basic and acidic residues; that stretch reads DRPRGPPRGDGERRFGDRDGY. Residues 152 to 180 are compositionally biased toward gly residues; sequence FRGGAGGARQGFGRGAGGFGGGAAGSDLP.

Belongs to the eukaryotic ribosomal protein eS10 family.

The protein localises to the cytoplasm. This is Small ribosomal subunit protein eS10y (RPS10B) from Arabidopsis thaliana (Mouse-ear cress).